We begin with the raw amino-acid sequence, 129 residues long: Small ribosomal subunit protein uS11 (129 aa).

The protein belongs to the universal ribosomal protein uS11 family. In terms of assembly, part of the 30S ribosomal subunit. Interacts with proteins S7 and S18. Binds to IF-3.

In terms of biological role, located on the platform of the 30S subunit, it bridges several disparate RNA helices of the 16S rRNA. Forms part of the Shine-Dalgarno cleft in the 70S ribosome. The chain is Small ribosomal subunit protein uS11 from Cereibacter sphaeroides (strain ATCC 17025 / ATH 2.4.3) (Rhodobacter sphaeroides).